The following is a 173-amino-acid chain: Peptide deformylase (173 aa).

Fe cation-binding residues include cysteine 98 and histidine 140. Glutamate 141 is an active-site residue. Position 144 (histidine 144) interacts with Fe cation.

The protein belongs to the polypeptide deformylase family. Fe(2+) serves as cofactor.

The enzyme catalyses N-terminal N-formyl-L-methionyl-[peptide] + H2O = N-terminal L-methionyl-[peptide] + formate. Removes the formyl group from the N-terminal Met of newly synthesized proteins. Requires at least a dipeptide for an efficient rate of reaction. N-terminal L-methionine is a prerequisite for activity but the enzyme has broad specificity at other positions. The protein is Peptide deformylase of Caulobacter sp. (strain K31).